A 132-amino-acid chain; its full sequence is Salivary protein 15 Iper-2 (132 aa).

A signal peptide spans 1–18; that stretch reads MKVVCIIVLFVIVAVNES. Residues Asn24, Asn36, Asn62, Asn89, and Asn101 are each glycosylated (N-linked (GlcNAc...) asparagine). The segment at 113-132 is CD4-binding; the sequence is GPNGQTCADKSQCVGHIPGC.

This sequence belongs to the salp15 family. As to quaternary structure, interacts with host CD4. Interacts with host DC-SIGN (CD209). In terms of assembly, (Microbial infection) Interacts with Borrelia outer surface protein C (OspC). In terms of tissue distribution, expressed in salivary glands from feeding female ticks. Highly expressed 1 day after start of feeding, and weakly expressed at the initiation of feeding and 4 days after start of feeding.

Its subcellular location is the secreted. In terms of biological role, salivary tick protein that downregulates host immune system by binding to both dendritic cells, and CD4(+) T cells. Specifically binds to the CD4 coreceptor on T cells. This interaction prevents the activation of the Src kinase, Lck, and its downstream substrate Zap-70, and results in deficient activation of PLCgamma1, the repression of calcium fluxes triggered by T-cell antigen receptor (TCR) ligation, and a subsequent reduction in interleukin-2 production. This salivary protein also binds to DC-SIGN (CD209) on dendritic cells (DC) and activates the Raf-1 kinase/MEK signaling pathway that results in down-regulating expression of pro-inflammatory cytokines. Furthermore, it inhibits T cell proliferation induced by DCs. It also inhibits in vitro keratinocyte inflammation induced by Borrelia burgdorferi or by the major outer surface protein (OspC) of Borrelia. In addition, it downregulates chemokines and monocyte chemoattractant protein 1, as well as several antimicrobial peptides such as defensins, cathelicidin, psoriasin, and RNase 7. Apart from its immunomodulatory activities, it is also associated with protection of Borrelia spirochetes from antibody-mediated killing through its binding to OspC. In vivo, tests on different immune disease animal models show promising therapeutic results, e.g., in inhibiting HIV infection, experimental autoimmune encephalomyelitis, transplantation rejection, and asthma. Its function is as follows. (Microbial infection) Protects Borrelia garinii from anti-Borrelia antibody-mediated cytotoxicity in vitro. May facilitate B.garinii transmission in mouse model. Functionally, (Microbial infection) Protects Borrelia burgdorferi from anti-Borrelia antibody-mediated cytotoxicity in vitro. (Microbial infection) Protects Borrelia afzelii from anti-Borrelia antibody-mediated cytotoxicity in vitro. This chain is Salivary protein 15 Iper-2, found in Ixodes persulcatus (Taiga tick).